The primary structure comprises 396 residues: NADH-quinone oxidoreductase subunit D (396 aa).

It belongs to the complex I 49 kDa subunit family. NDH-1 is composed of 14 different subunits. Subunits NuoB, C, D, E, F, and G constitute the peripheral sector of the complex.

It is found in the cell inner membrane. The catalysed reaction is a quinone + NADH + 5 H(+)(in) = a quinol + NAD(+) + 4 H(+)(out). NDH-1 shuttles electrons from NADH, via FMN and iron-sulfur (Fe-S) centers, to quinones in the respiratory chain. The immediate electron acceptor for the enzyme in this species is believed to be ubiquinone. Couples the redox reaction to proton translocation (for every two electrons transferred, four hydrogen ions are translocated across the cytoplasmic membrane), and thus conserves the redox energy in a proton gradient. The sequence is that of NADH-quinone oxidoreductase subunit D from Orientia tsutsugamushi (strain Boryong) (Rickettsia tsutsugamushi).